Here is a 264-residue protein sequence, read N- to C-terminus: RNA-binding protein pos-1 (264 aa).

Residues 56 to 82 (QDKETQNSASQPTSEQSLANRDPCTVP) are disordered. Over residues 61–74 (QNSASQPTSEQSLA) the composition is skewed to polar residues. 2 C3H1-type zinc fingers span residues 98–126 (AFKT…HGVH) and 141–169 (KYKT…HKIV). The Zn(2+) site is built by Cys-104, Cys-113, Cys-119, His-123, Cys-147, Cys-156, Cys-162, and His-166.

Monomer.

Its subcellular location is the cytoplasm. RNA-binding protein that coordinates cell fate specification and differentiation during early embryogenesis. Binds to a consensus pos-1 recognition element (PRE) consisting of the sequence 5'-UA(U 2-3)RGD(N 1-3)G-3', where R is any purine, D is A, G, or U, and N is any base. The PRE motif is found within the 3' untranslated region of many maternal transcripts required for early development. Binds to the 3' untranslated region (UTR) of Notch receptor homolog glp-1, thereby repressing glp-1 translation in the posterior blastomeres in the embryo. Binding to glp-1 3' UTR excludes cell fate regulator gld-1 binding to an overlapping binding site in the glp-1 3' UTR. Binds to the neg-1 3'UTR thereby opposing neg-1 expression and cytoplasmic polyadenylation of the neg-1 mRNA poly(A) tail promoted by gld-2 and gld-3. By inhibiting the cytoplasmic lengthening of neg-1 mRNA, restricts the accumulation of neg-1 protein and promotes endo-mesoderm development in anterior blastomeres. Essential for germline specification. The protein is RNA-binding protein pos-1 of Caenorhabditis elegans.